We begin with the raw amino-acid sequence, 448 residues long: 3-phosphoshikimate 1-carboxyvinyltransferase (448 aa).

The 3-phosphoshikimate site is built by Lys-38, Ser-39, and Arg-43. Residue Lys-38 participates in phosphoenolpyruvate binding. Residues Gly-111 and Arg-140 each coordinate phosphoenolpyruvate. 3-phosphoshikimate contacts are provided by Ser-185, Gln-187, Asp-335, and Lys-362. Position 187 (Gln-187) interacts with phosphoenolpyruvate. Asp-335 functions as the Proton acceptor in the catalytic mechanism. Phosphoenolpyruvate contacts are provided by Arg-366 and Arg-408.

Belongs to the EPSP synthase family. In terms of assembly, monomer.

It localises to the cytoplasm. The catalysed reaction is 3-phosphoshikimate + phosphoenolpyruvate = 5-O-(1-carboxyvinyl)-3-phosphoshikimate + phosphate. It functions in the pathway metabolic intermediate biosynthesis; chorismate biosynthesis; chorismate from D-erythrose 4-phosphate and phosphoenolpyruvate: step 6/7. In terms of biological role, catalyzes the transfer of the enolpyruvyl moiety of phosphoenolpyruvate (PEP) to the 5-hydroxyl of shikimate-3-phosphate (S3P) to produce enolpyruvyl shikimate-3-phosphate and inorganic phosphate. The polypeptide is 3-phosphoshikimate 1-carboxyvinyltransferase (Gloeothece citriformis (strain PCC 7424) (Cyanothece sp. (strain PCC 7424))).